The primary structure comprises 90 residues: uncharacterized protein (90 aa).

This is an uncharacterized protein from Saccharolobus islandicus (Sulfolobus islandicus).